A 234-amino-acid polypeptide reads, in one-letter code: Large ribosomal subunit protein uL1 (234 aa).

The protein belongs to the universal ribosomal protein uL1 family. Part of the 50S ribosomal subunit.

Functionally, binds directly to 23S rRNA. The L1 stalk is quite mobile in the ribosome, and is involved in E site tRNA release. In terms of biological role, protein L1 is also a translational repressor protein, it controls the translation of the L11 operon by binding to its mRNA. This Helicobacter hepaticus (strain ATCC 51449 / 3B1) protein is Large ribosomal subunit protein uL1.